Here is a 223-residue protein sequence, read N- to C-terminus: Spore wall protein 26 (223 aa).

The N-terminal stretch at Met-1–Ala-16 is a signal peptide. Positions Ser-207–Ser-214 match the HBM motif.

It localises to the spore core. It is found in the spore wall. The protein localises to the spore. The protein resides in the perispore. Its function is as follows. Spore wall protein involved in the adhesion to host cells surface. Microsporidian spore adherence is an integral part of activation and host cell invasion which requires the extrusion at the spore apex of a very long and coiled structure, the polar tube, through which the sporoplasm is pushed to enter into the potential host cell. The polypeptide is Spore wall protein 26 (SWP26) (Nosema bombycis (strain CQ1 / CVCC 102059) (Microsporidian parasite)).